Consider the following 587-residue polypeptide: Membrane protein insertase YidC (587 aa).

The next 5 membrane-spanning stretches (helical) occupy residues 5 to 25 (SVIG…FMKP), 365 to 385 (GLII…LSLA), 430 to 450 (LGGC…FYVF), 480 to 500 (LPLY…TVFF), and 516 to 536 (IMIW…PSGL).

The protein belongs to the OXA1/ALB3/YidC family. Type 1 subfamily. As to quaternary structure, interacts with the Sec translocase complex via SecD. Specifically interacts with transmembrane segments of nascent integral membrane proteins during membrane integration.

It localises to the cell inner membrane. Functionally, required for the insertion and/or proper folding and/or complex formation of integral membrane proteins into the membrane. Involved in integration of membrane proteins that insert both dependently and independently of the Sec translocase complex, as well as at least some lipoproteins. Aids folding of multispanning membrane proteins. The chain is Membrane protein insertase YidC from Chlorobaculum parvum (strain DSM 263 / NCIMB 8327) (Chlorobium vibrioforme subsp. thiosulfatophilum).